Here is a 170-residue protein sequence, read N- to C-terminus: MSHMLSIEPLTREAFAPFGSVIEADPASMRFINGGNTERFHALARVDAAGEGAGVIINIFRGQPRVFPYSVTMMERHPLGSQSFSPLRDRPWLVVVAEDQGDRPGRPRVFIADGRQGVNYGRNVWHHPLMSVGAVSEFIVVDREGPGNNLEEFHYDEAFVIPDPSSEELR.

Belongs to the ureidoglycolate lyase family. Homodimer. Ni(2+) serves as cofactor.

The enzyme catalyses (S)-ureidoglycolate = urea + glyoxylate. Its pathway is nitrogen metabolism; (S)-allantoin degradation. Catalyzes the catabolism of the allantoin degradation intermediate (S)-ureidoglycolate, generating urea and glyoxylate. Involved in the utilization of allantoin as nitrogen source. The protein is Ureidoglycolate lyase 1 of Rhizobium meliloti (strain 1021) (Ensifer meliloti).